The following is a 438-amino-acid chain: Enolase (438 aa).

Residue Q174 participates in (2R)-2-phosphoglycerate binding. Catalysis depends on E216, which acts as the Proton donor. The Mg(2+) site is built by D253, E297, and D324. K349, R378, S379, and K400 together coordinate (2R)-2-phosphoglycerate. K349 acts as the Proton acceptor in catalysis.

Belongs to the enolase family. In terms of assembly, component of the RNA degradosome, a multiprotein complex involved in RNA processing and mRNA degradation. It depends on Mg(2+) as a cofactor.

Its subcellular location is the cytoplasm. It is found in the secreted. It localises to the cell surface. It catalyses the reaction (2R)-2-phosphoglycerate = phosphoenolpyruvate + H2O. The protein operates within carbohydrate degradation; glycolysis; pyruvate from D-glyceraldehyde 3-phosphate: step 4/5. In terms of biological role, catalyzes the reversible conversion of 2-phosphoglycerate (2-PG) into phosphoenolpyruvate (PEP). It is essential for the degradation of carbohydrates via glycolysis. The polypeptide is Enolase (Psychrobacter arcticus (strain DSM 17307 / VKM B-2377 / 273-4)).